We begin with the raw amino-acid sequence, 477 residues long: Glycogen synthase (477 aa).

Lys15 is a binding site for ADP-alpha-D-glucose.

Belongs to the glycosyltransferase 1 family. Bacterial/plant glycogen synthase subfamily.

It carries out the reaction [(1-&gt;4)-alpha-D-glucosyl](n) + ADP-alpha-D-glucose = [(1-&gt;4)-alpha-D-glucosyl](n+1) + ADP + H(+). The protein operates within glycan biosynthesis; glycogen biosynthesis. Functionally, synthesizes alpha-1,4-glucan chains using ADP-glucose. The protein is Glycogen synthase of Salmonella typhi.